The chain runs to 275 residues: MHQQLQNIIETAFERRADITPANADTVTREAVNQAINLLDSGALRVAEKIDGQWVTHQWLKKAVLLSFRINDNQLIEGGETRFFDKVPMKFADYDEARFQREGVRVAPPASVRRGAYIARNTVLMPSYVNIGAYVDEGTMVDTWVTVGSCAQIGKNVHLSGGVGIGGVLEPLQANPTIIEDNCFIGARSEVVEGVVVEEGSVISMGVFISQSTRIYDRETGEIHYGRVPAGSVVVSGNLPSKDGSHSMYCAIIVKKVDAKTRGKVGINELLRSID.

Substrate contacts are provided by R105 and D142.

Belongs to the transferase hexapeptide repeat family. As to quaternary structure, homotrimer.

The protein resides in the cytoplasm. The catalysed reaction is (S)-2,3,4,5-tetrahydrodipicolinate + succinyl-CoA + H2O = (S)-2-succinylamino-6-oxoheptanedioate + CoA. It functions in the pathway amino-acid biosynthesis; L-lysine biosynthesis via DAP pathway; LL-2,6-diaminopimelate from (S)-tetrahydrodipicolinate (succinylase route): step 1/3. In Pectobacterium atrosepticum (strain SCRI 1043 / ATCC BAA-672) (Erwinia carotovora subsp. atroseptica), this protein is 2,3,4,5-tetrahydropyridine-2,6-dicarboxylate N-succinyltransferase.